The following is a 295-amino-acid chain: Ubiquinol-cytochrome c reductase complex assembly factor 1 (295 aa).

This sequence belongs to the CBP3 family. As to quaternary structure, interacts with UQCC2. Interacts with UQCC3. Forms a complex, named COMB/coordinator of mitochondrial CYTB biogenesis, composed of UQCC1, UQCC2, UQCC4, UQCC5 and UQCC6; stabilizes nascent cytochrome b/MT-CYB and promotes its membrane insertion. Forms a complex, named COMA, composed of UQCC1, UQCC2 and UQCC4; activates MT-CYB translation. Forms a complex, named COMC, composed of UQCC1, UQCC2; UQCC3 and UQCC4; mediates MT-CYB hemylation and association with the first nuclear-encoded CIII subunit UQCRQ. In terms of tissue distribution, in the brain it is restricted to the olfactory bulb, the hippocampus, the piriform cortex and the Purkinje cells.

It is found in the mitochondrion inner membrane. The protein resides in the cytoplasmic vesicle. Functionally, required for the assembly of the ubiquinol-cytochrome c reductase complex (mitochondrial respiratory chain complex III or cytochrome b-c1 complex). Involved in cytochrome b translation and/or stability. The chain is Ubiquinol-cytochrome c reductase complex assembly factor 1 (Uqcc1) from Mus musculus (Mouse).